The sequence spans 315 residues: Olfactory receptor 2V1 (315 aa).

Transmembrane regions (helical) follow at residues 31–51 (TVML…LLIY), 59–79 (PMYF…CNIV), 100–120 (IQIG…GLMA), 145–165 (IAGS…VAAM), 196–216 (FDTL…SIIV), 239–259 (LATC…AMFI), and 273–293 (KVVS…IYSL). Cysteine 98 and cysteine 180 are oxidised to a cystine.

It belongs to the G-protein coupled receptor 1 family.

It is found in the cell membrane. In terms of biological role, odorant receptor. Activated by (+) and (-)-limonene. The polypeptide is Olfactory receptor 2V1 (Mus musculus (Mouse)).